Consider the following 469-residue polypeptide: UDP-N-acetylmuramate--L-alanine ligase (469 aa).

113 to 119 (GSHGKTT) is a binding site for ATP.

The protein belongs to the MurCDEF family.

It is found in the cytoplasm. It catalyses the reaction UDP-N-acetyl-alpha-D-muramate + L-alanine + ATP = UDP-N-acetyl-alpha-D-muramoyl-L-alanine + ADP + phosphate + H(+). It participates in cell wall biogenesis; peptidoglycan biosynthesis. Cell wall formation. This Sorangium cellulosum (strain So ce56) (Polyangium cellulosum (strain So ce56)) protein is UDP-N-acetylmuramate--L-alanine ligase.